We begin with the raw amino-acid sequence, 251 residues long: MTDYFTPENKLPGSREYLSPSGRFKLTVENYKTGKGCWNYTKGIVTNVDNGEIISEIKRNYSVFTHNFFIKNQSEWLFCGRTYMSQCFINLETGEEFDNSDKINKESLCWANVMANPSGTILAVEACIWGGPYVLDFYDFSDPSKGWSHIPYHNYDDDYDLTLFRTYELKWLSDSEFQYQNNREIHEKSGKEIYDMDLDEITSTKNDNFIEVLYYKVILSKVGSNMEFTSTETSPEHQADLKDDNSDISST.

Positions 229 to 251 (TSTETSPEHQADLKDDNSDISST) are disordered. Basic and acidic residues predominate over residues 234 to 245 (SPEHQADLKDDN).

This is an uncharacterized protein from Acanthamoeba polyphaga (Amoeba).